The sequence spans 258 residues: Chaperone protein caf1M (258 aa).

Residues 1–20 (MILNRLSTLGIITFGMLSFA) form the signal peptide. Residues C121 and C160 are joined by a disulfide bond.

The protein belongs to the periplasmic pilus chaperone family.

It is found in the periplasm. Functionally, has a stimulatory role for the envelope antigen F1 secretion. It seems to interact with the subunit polypeptide and to prevent it from digestion by a protease. The polypeptide is Chaperone protein caf1M (caf1M) (Yersinia pestis).